We begin with the raw amino-acid sequence, 230 residues long: MKEREKVVRLAKLAEQAERYDDMVEFMKTLARMDVDMSAEERLLFSVGFKKTIGARRASWRILESLEQKVTAGDQPGVTINGYKKKVEDELRAVCNEVLSIIAIHCLPLANSGENVVFFYKMKGDYYRYLAEFSTGTEKKAATDQSLMAYQAWPCAQLFSLLEIMNSPERASQVAKQALDEATAEINSAGVEGYKDSMLMMQLLKENLALWTSELTGGETSKDDDVVMEG.

The protein belongs to the 14-3-3 family.

Functionally, is associated with a DNA binding complex that binds to the G box, a well-characterized cis-acting DNA regulatory element found in plant genes. The sequence is that of Putative 14-3-3-like protein GF14-H (GF14H) from Oryza sativa subsp. japonica (Rice).